Reading from the N-terminus, the 546-residue chain is Chaperonin GroEL (546 aa).

Residues 30-33 (TLGP), K51, 87-91 (DGTTT), G415, and D497 each bind ATP. Residues 527 to 546 (PKKDSPAPAMPGGGMGGMDF) form a disordered region. The segment covering 537 to 546 (PGGGMGGMDF) has biased composition (gly residues).

This sequence belongs to the chaperonin (HSP60) family. In terms of assembly, forms a cylinder of 14 subunits composed of two heptameric rings stacked back-to-back. Interacts with the co-chaperonin GroES.

The protein resides in the cytoplasm. The catalysed reaction is ATP + H2O + a folded polypeptide = ADP + phosphate + an unfolded polypeptide.. Functionally, together with its co-chaperonin GroES, plays an essential role in assisting protein folding. The GroEL-GroES system forms a nano-cage that allows encapsulation of the non-native substrate proteins and provides a physical environment optimized to promote and accelerate protein folding. In Methylobacterium radiotolerans (strain ATCC 27329 / DSM 1819 / JCM 2831 / NBRC 15690 / NCIMB 10815 / 0-1), this protein is Chaperonin GroEL.